We begin with the raw amino-acid sequence, 237 residues long: Ribosomal RNA small subunit methyltransferase G (237 aa).

Residues Gly78, Phe83, Ala129–Glu130, and Arg148 each bind S-adenosyl-L-methionine.

This sequence belongs to the methyltransferase superfamily. RNA methyltransferase RsmG family.

The protein localises to the cytoplasm. In terms of biological role, specifically methylates the N7 position of a guanine in 16S rRNA. In Streptococcus thermophilus (strain ATCC BAA-491 / LMD-9), this protein is Ribosomal RNA small subunit methyltransferase G.